A 333-amino-acid chain; its full sequence is Procathepsin L (333 aa).

An N-terminal signal peptide occupies residues 1–17 (MNPTLILAAFCLGIASA). Residues 18–113 (TLTFDHSLEA…KVFQEPLFYE (96 aa)) constitute a propeptide, activation peptide. E122 lines the Zn(2+) pocket. 2 cysteine pairs are disulfide-bonded: C135–C178 and C169–C211. C138 is an active-site residue. E163, D184, E199, E205, and E209 together coordinate Zn(2+). N221 carries N-linked (GlcNAc...) asparagine glycosylation. Residues D227, D250, H253, D273, and D275 each contribute to the Zn(2+) site. C269 and C322 are disulfide-bonded. The active site involves H276. Positions 289-291 (ESD) are excised as a propeptide. The active site involves N300.

This sequence belongs to the peptidase C1 family. As to quaternary structure, dimer of a heavy and a light chain linked by disulfide bonds. Interacts with Long isoform of CD74/Ii chain; the interaction stabilizes the conformation of mature CTSL. Post-translationally, during export along the endocytic pathway, pro-CTSL undergoes several proteolytic cleavages to generate the CTSL single-chain and two-chain mature forms, composed of a heavy chain linked to a light chain by disulfide bonds. Autocleavage; produces the single-chain CTSL after cleavage of the propeptide. The cleavage can be intermolecular.

It localises to the lysosome. The protein resides in the apical cell membrane. Its subcellular location is the cytoplasmic vesicle. The protein localises to the secretory vesicle. It is found in the chromaffin granule. It localises to the secreted. The protein resides in the extracellular space. Its subcellular location is the nucleus. It carries out the reaction Specificity close to that of papain. As compared to cathepsin B, cathepsin L exhibits higher activity toward protein substrates, but has little activity on Z-Arg-Arg-NHMec, and no peptidyl-dipeptidase activity.. Inhibited by the propeptide produced by autocleavage. Long isoform of CD74/Ii chain stabilizes the conformation of mature CTSL by binding to its active site and serving as a chaperone to help maintain a pool of mature enzyme in endocytic compartments and extracellular space of APCs. IFNG enhances the conversion into the CTSL mature and active form. Inhibited by CST6. Inhibited by the glycopeptide antibiotic teicoplanin. Inhibited by amantadine. In terms of biological role, thiol protease important for the overall degradation of proteins in lysosomes. Plays a critical for normal cellular functions such as general protein turnover, antigen processing and bone remodeling. Involved in the solubilization of cross-linked TG/thyroglobulin and in the subsequent release of thyroid hormone thyroxine (T4) by limited proteolysis of TG/thyroglobulin in the thyroid follicle lumen. In neuroendocrine chromaffin cells secretory vesicles, catalyzes the prohormone proenkephalin processing to the active enkephalin peptide neurotransmitter. In thymus, regulates CD4(+) T cell positive selection by generating the major histocompatibility complex class II (MHCII) bound peptide ligands presented by cortical thymic epithelial cells. Also mediates invariant chain processing in cortical thymic epithelial cells. Major elastin-degrading enzyme at neutral pH. Accumulates as a mature and active enzyme in the extracellular space of antigen presenting cells (APCs) to regulate degradation of the extracellular matrix in the course of inflammation. Secreted form generates endostatin from COL18A1. Critical for cardiac morphology and function. Plays an important role in hair follicle morphogenesis and cycling, as well as epidermal differentiation. Required for maximal stimulation of steroidogenesis by TIMP1. (Microbial infection) In cells lacking TMPRSS2 expression, facilitates human coronaviruses SARS-CoV and SARS-CoV-2 infections via a slow acid-activated route with the proteolysis of coronavirus spike (S) glycoproteins in lysosome for entry into host cell. Proteolysis within lysosomes is sufficient to activate membrane fusion by coronaviruses SARS-CoV and EMC (HCoV-EMC) S as well as Zaire ebolavirus glycoproteins. Its function is as follows. Functions in the regulation of cell cycle progression through proteolytic processing of the CUX1 transcription factor. Translation initiation at downstream start sites allows the synthesis of isoforms that are devoid of a signal peptide and localize to the nucleus where they cleave the CUX1 transcription factor and modify its DNA binding properties. This Homo sapiens (Human) protein is Procathepsin L.